The primary structure comprises 786 residues: Cyclin-F (786 aa).

The Nuclear localization signal 1 signature appears at 20–28 (KRRIRRRPR). The F-box domain occupies 29 to 76 (NLTILSLPEDVLFHILKWLSVEDILAVRAVHSQLKDLVDNHASVWACA). A Cyclin N-terminal domain is found at 288–405 (QASQAVSKQQ…EIVSALEGKI (118 aa)). 4 consecutive short sequence motifs (d box) follow at residues 310-313 (RYIL), 343-346 (RRRL), 349-352 (RYRL), and 351-354 (RLQL). 2 disordered regions span residues 564–593 (SPSG…TAEL) and 675–738 (TQIP…HTQP). The short motif at 568–574 (RRTKRKR) is the Nuclear localization signal 2 element. The PEST stretch occupies residues 582–766 (RGSFVTTPTA…ESSVPQQQVK (185 aa)). Over residues 697-714 (VTTSGYSSVSTASPTSSV) the composition is skewed to low complexity. Polar residues predominate over residues 723–738 (QPTSVLSLDSDSHTQP). Positions 767 to 770 (RINL) match the D box 5 motif.

Belongs to the cyclin family. Cyclin AB subfamily. In terms of assembly, component of the SCF(CCNF) complex consisting of CUL1, RBX1, SKP1 and CCNF. Interacts with SKP1. Interacts with CUL1. Interacts with CCNB1; interaction is required for nuclear localization of CCNB1. Interacts with CCP110; this interaction leads to CCP110 ubiquitination and degradation via the proteasome pathway. Interacts (via the Cyclin N-terminal domain) with MYBL2/BMYB. Interacts with FZR1/CDH1 (via N-terminus). Interacts with RRM2 (via Cy motif and when phosphorylated at 'Thr-33'); the interaction occurs exclusively in G2 and early M. Interacts with CDC6 (via Cy motif); the interaction takes place during G2 and M phase. Post-translationally, degraded when the spindle assembly checkpoint is activated during the G2-M transition. Degradation depends on the C-terminal PEST sequence. In terms of processing, phosphorylated just before cells enter into mitosis. Ubiquitinated by the anaphase-promoting complex (APC/C); leading to its degradation by the proteasome. Widely expressed, with expression detected in the heart, brain, placenta, lung, liver, skeletal muscle, kidney and pancreas.

The protein localises to the nucleus. It localises to the cytoplasm. Its subcellular location is the perinuclear region. The protein resides in the cytoskeleton. It is found in the microtubule organizing center. The protein localises to the centrosome. It localises to the centriole. Its function is as follows. Substrate recognition component of a SCF (SKP1-CUL1-F-box protein) E3 ubiquitin-protein ligase complex which mediates the ubiquitination and subsequent proteasomal degradation of target proteins. The SCF(CCNF) E3 ubiquitin-protein ligase complex is an integral component of the ubiquitin proteasome system (UPS) and links proteasome degradation to the cell cycle. Mediates the substrate recognition and the proteasomal degradation of various target proteins involved in the regulation of cell cycle progression and in the maintenance of genome stability. Mediates the ubiquitination and proteasomal degradation of CP110 during G2 phase, thereby acting as an inhibitor of centrosome reduplication. In G2, mediates the ubiquitination and subsequent degradation of ribonucleotide reductase RRM2, thereby maintaining a balanced pool of dNTPs and genome integrity. In G2, mediates the ubiquitination and proteasomal degradation of CDC6, thereby suppressing DNA re-replication and preventing genome instability. Involved in the ubiquitination and degradation of the substrate adapter CDH1 of the anaphase-promoting complex (APC/C), thereby acting as an antagonist of APC/C in regulating G1 progression and S phase entry. May play a role in the G2 cell cycle checkpoint control after DNA damage, possibly by promoting the ubiquitination of MYBL2/BMYB. In Homo sapiens (Human), this protein is Cyclin-F (CCNF).